We begin with the raw amino-acid sequence, 502 residues long: Maturase K (502 aa).

This sequence belongs to the intron maturase 2 family. MatK subfamily.

Its subcellular location is the plastid. The protein localises to the chloroplast. Usually encoded in the trnK tRNA gene intron. Probably assists in splicing its own and other chloroplast group II introns. In Fremontodendron californicum (California flannelbush), this protein is Maturase K.